A 442-amino-acid polypeptide reads, in one-letter code: Tryptophan synthase beta chain 2 (442 aa).

An N6-(pyridoxal phosphate)lysine modification is found at lysine 110.

This sequence belongs to the TrpB family. As to quaternary structure, tetramer of two alpha and two beta chains. Requires pyridoxal 5'-phosphate as cofactor.

It carries out the reaction (1S,2R)-1-C-(indol-3-yl)glycerol 3-phosphate + L-serine = D-glyceraldehyde 3-phosphate + L-tryptophan + H2O. It functions in the pathway amino-acid biosynthesis; L-tryptophan biosynthesis; L-tryptophan from chorismate: step 5/5. Its function is as follows. The beta subunit is responsible for the synthesis of L-tryptophan from indole and L-serine. This chain is Tryptophan synthase beta chain 2, found in Thermococcus kodakarensis (strain ATCC BAA-918 / JCM 12380 / KOD1) (Pyrococcus kodakaraensis (strain KOD1)).